The sequence spans 204 residues: Ribonuclease HII (204 aa).

An RNase H type-2 domain is found at glutamine 17–aspartate 204. The a divalent metal cation site is built by aspartate 23, glutamate 24, and aspartate 115.

The protein belongs to the RNase HII family. Mn(2+) serves as cofactor. It depends on Mg(2+) as a cofactor.

It is found in the cytoplasm. It carries out the reaction Endonucleolytic cleavage to 5'-phosphomonoester.. In terms of biological role, endonuclease that specifically degrades the RNA of RNA-DNA hybrids. The polypeptide is Ribonuclease HII (Hahella chejuensis (strain KCTC 2396)).